Consider the following 362-residue polypeptide: Serine/threonine-protein kinase SBK2 (362 aa).

Basic and acidic residues predominate over residues 1–11; that stretch reads MPGKQSEDKPM. The tract at residues 1-26 is disordered; sequence MPGKQSEDKPMEVSTVEDGGDEGLGG. One can recognise a Protein kinase domain in the interval 62 to 330; the sequence is YEEVRPLGQG…IKSYLGQPWK (269 aa). ATP is bound by residues 68–76 and lysine 91; that span reads LGQGRFGRV. The active-site Proton acceptor is aspartate 183. The tract at residues 329-362 is disordered; that stretch reads WKQREGEAEELATELREDGWRGGQEAAKGEQPAC.

It belongs to the protein kinase superfamily. Ser/Thr protein kinase family. STKL subfamily.

The enzyme catalyses L-seryl-[protein] + ATP = O-phospho-L-seryl-[protein] + ADP + H(+). It carries out the reaction L-threonyl-[protein] + ATP = O-phospho-L-threonyl-[protein] + ADP + H(+). The polypeptide is Serine/threonine-protein kinase SBK2 (Sbk2) (Mus musculus (Mouse)).